Consider the following 91-residue polypeptide: Small ribosomal subunit protein uS15c (91 aa).

Belongs to the universal ribosomal protein uS15 family. As to quaternary structure, part of the 30S ribosomal subunit.

Its subcellular location is the plastid. The protein resides in the chloroplast. This is Small ribosomal subunit protein uS15c (rps15) from Adiantum capillus-veneris (Maidenhair fern).